The following is a 24-amino-acid chain: Brevinin-1CSa (24 aa).

Residues cysteine 18 and cysteine 24 are joined by a disulfide bond.

As to expression, expressed by the skin glands.

Its subcellular location is the secreted. It localises to the target cell membrane. Antibacterial peptide. Has activity against the Gram-positive bacterium S.aureus (MIC=2 uM) and the Gram-negative bacterium E.coli (MIC=32 uM). Has a strong hemolytic activity (LC(50)=5 uM). The sequence is that of Brevinin-1CSa from Rana cascadae (Cascades frog).